The chain runs to 261 residues: Small ribosomal subunit protein eS4 (261 aa).

An S4 RNA-binding domain is found at 42 to 100 (LPLILILRNRLKYALTYREVVSILMQRHILVDGKIHFCIRLSDVVSIPKTNENFRLLYD).

This sequence belongs to the eukaryotic ribosomal protein eS4 family.

The protein localises to the cytoplasm. This chain is Small ribosomal subunit protein eS4 (RPS4), found in Prunus armeniaca (Apricot).